Here is a 315-residue protein sequence, read N- to C-terminus: Malate dehydrogenase (315 aa).

NAD(+) contacts are provided by residues 10–15 and Asp-34; that span reads GSGFTG. Residues Arg-85 and Arg-91 each contribute to the substrate site. Residues Asn-98 and 121–123 each bind NAD(+); that span reads LTN. 2 residues coordinate substrate: Asn-123 and Arg-154. His-178 acts as the Proton acceptor in catalysis.

It belongs to the LDH/MDH superfamily. MDH type 3 family.

It catalyses the reaction (S)-malate + NAD(+) = oxaloacetate + NADH + H(+). Catalyzes the reversible oxidation of malate to oxaloacetate. This Symbiobacterium thermophilum (strain DSM 24528 / JCM 14929 / IAM 14863 / T) protein is Malate dehydrogenase.